The sequence spans 356 residues: Sulfate/thiosulfate import ATP-binding protein CysA (356 aa).

Positions 3–237 (IEVKNLVKRF…PKNSFVFHFL (235 aa)) constitute an ABC transporter domain. Residue 35 to 42 (GPSGSGKT) participates in ATP binding.

It belongs to the ABC transporter superfamily. Sulfate/tungstate importer (TC 3.A.1.6) family. The complex is composed of two ATP-binding proteins (CysA), two transmembrane proteins (CysT and CysW) and a solute-binding protein (CysP).

It is found in the cell inner membrane. It carries out the reaction sulfate(out) + ATP + H2O = sulfate(in) + ADP + phosphate + H(+). The catalysed reaction is thiosulfate(out) + ATP + H2O = thiosulfate(in) + ADP + phosphate + H(+). In terms of biological role, part of the ABC transporter complex CysAWTP involved in sulfate/thiosulfate import. Responsible for energy coupling to the transport system. The chain is Sulfate/thiosulfate import ATP-binding protein CysA from Leptospira interrogans serogroup Icterohaemorrhagiae serovar copenhageni (strain Fiocruz L1-130).